Here is a 149-residue protein sequence, read N- to C-terminus: SsrA-binding protein (149 aa).

The protein belongs to the SmpB family.

The protein localises to the cytoplasm. Required for rescue of stalled ribosomes mediated by trans-translation. Binds to transfer-messenger RNA (tmRNA), required for stable association of tmRNA with ribosomes. tmRNA and SmpB together mimic tRNA shape, replacing the anticodon stem-loop with SmpB. tmRNA is encoded by the ssrA gene; the 2 termini fold to resemble tRNA(Ala) and it encodes a 'tag peptide', a short internal open reading frame. During trans-translation Ala-aminoacylated tmRNA acts like a tRNA, entering the A-site of stalled ribosomes, displacing the stalled mRNA. The ribosome then switches to translate the ORF on the tmRNA; the nascent peptide is terminated with the 'tag peptide' encoded by the tmRNA and targeted for degradation. The ribosome is freed to recommence translation, which seems to be the essential function of trans-translation. The sequence is that of SsrA-binding protein from Acholeplasma laidlawii (strain PG-8A).